The chain runs to 99 residues: Accessory protein p12I (99 aa).

The chain crosses the membrane as a helical span at residues 3–23; the sequence is FRLLSPLSPLALTALLLFLLP. 2 short sequence motifs (SH3-binding) span residues 4 to 11 and 33 to 38; these read RLLSPLSP and RPPPAP. A helical transmembrane segment spans residues 48–68; the sequence is ILSGLLFLLFLPLFFSLPLLL. Short sequence motifs (SH3-binding) lie at residues 70–77 and 88–93; these read PSLPITMR and KAPSQP. A Glycyl lysine isopeptide (Lys-Gly) (interchain with G-Cter in ubiquitin); in isolate LAF cross-link involves residue K88.

This sequence belongs to the HTLV-1 accessory protein p12I family. P12I is a homodimer. Interacts with human CANX, CALR, ATP6V0C, IL2RB, IL2RG. Binds to MHC-I heavy chains HLA-A2, HLA-B7 and HLA-Cw4. Ubiquitinated; a fraction of P12I is degraded via the ubiquitin system.

Its subcellular location is the host endoplasmic reticulum membrane. The protein localises to the host Golgi apparatus. The protein resides in the host cis-Golgi network membrane. Functionally, p12I is a modulator of T-lymphocyte proliferation and immune function and may contribute to establish a persistent infection. Binds and down-modulates cell surface expression of interleukin-2 receptors IL2RB and IL2RG. Also down-modulates cell surface MHC-I molecules by binding to free immature MHC-I heavy chains in the ER and targeting them to the proteasome for degradation. Binding to IL2RB mediates recruitment of JAK1 and JAK3. As a result of this interaction, p12I increases DNA-binding and transcriptional activity of STAT5. The sequence is that of Accessory protein p12I from Homo sapiens (Human).